The chain runs to 418 residues: MTIAEQIRTIAADARQAAIAMAKLPTTAKNDLLMAMAMALISNTPHLIDENRKDLEAGEKKGLSSAMLDRLMLDEARIKAMADGLREVAGLPDPVGEVTRMWKRPNNLMVGKMRIPLGVIGIIYEARPNVTADAAALCLKAGNSVILRGGSEAIHSNLAIARILGEEMERAGIPKAALSVIPFPEREGVLEMLKQEEFIDLIIPRGGESLIRFVVEHSKIPVIKHYKGVCHVFVDASADFDMAERIVVNAKVQRPGVCNALETLLIHKDVAEAFIPRIAATLTDLKVELRGDDCVRQFAPQAKKATEEDWQAEYLELILAVRVVDGLNEAIDHINAYGSLHTEAIVTRDYHNSQRFIREVNSSTVLVNASTRFADGNQLGLGAEIGISTTKLHSFGPMGLEDLTTTKFIVYGDGQVRQ.

It belongs to the gamma-glutamyl phosphate reductase family.

It localises to the cytoplasm. It catalyses the reaction L-glutamate 5-semialdehyde + phosphate + NADP(+) = L-glutamyl 5-phosphate + NADPH + H(+). It functions in the pathway amino-acid biosynthesis; L-proline biosynthesis; L-glutamate 5-semialdehyde from L-glutamate: step 2/2. Its function is as follows. Catalyzes the NADPH-dependent reduction of L-glutamate 5-phosphate into L-glutamate 5-semialdehyde and phosphate. The product spontaneously undergoes cyclization to form 1-pyrroline-5-carboxylate. This is Gamma-glutamyl phosphate reductase from Geobacter metallireducens (strain ATCC 53774 / DSM 7210 / GS-15).